The chain runs to 316 residues: 4-hydroxy-3-methylbut-2-enyl diphosphate reductase (316 aa).

[4Fe-4S] cluster is bound at residue cysteine 12. 2 residues coordinate (2E)-4-hydroxy-3-methylbut-2-enyl diphosphate: histidine 41 and histidine 74. Residues histidine 41 and histidine 74 each coordinate dimethylallyl diphosphate. 2 residues coordinate isopentenyl diphosphate: histidine 41 and histidine 74. Cysteine 96 provides a ligand contact to [4Fe-4S] cluster. Histidine 124 is a binding site for (2E)-4-hydroxy-3-methylbut-2-enyl diphosphate. Residue histidine 124 participates in dimethylallyl diphosphate binding. Histidine 124 is an isopentenyl diphosphate binding site. Catalysis depends on glutamate 126, which acts as the Proton donor. Threonine 169 contributes to the (2E)-4-hydroxy-3-methylbut-2-enyl diphosphate binding site. Cysteine 199 lines the [4Fe-4S] cluster pocket. Residues serine 227, serine 228, asparagine 229, and serine 271 each coordinate (2E)-4-hydroxy-3-methylbut-2-enyl diphosphate. Positions 227, 228, 229, and 271 each coordinate dimethylallyl diphosphate. Isopentenyl diphosphate contacts are provided by serine 227, serine 228, asparagine 229, and serine 271.

It belongs to the IspH family. The cofactor is [4Fe-4S] cluster.

It catalyses the reaction isopentenyl diphosphate + 2 oxidized [2Fe-2S]-[ferredoxin] + H2O = (2E)-4-hydroxy-3-methylbut-2-enyl diphosphate + 2 reduced [2Fe-2S]-[ferredoxin] + 2 H(+). The catalysed reaction is dimethylallyl diphosphate + 2 oxidized [2Fe-2S]-[ferredoxin] + H2O = (2E)-4-hydroxy-3-methylbut-2-enyl diphosphate + 2 reduced [2Fe-2S]-[ferredoxin] + 2 H(+). Its pathway is isoprenoid biosynthesis; dimethylallyl diphosphate biosynthesis; dimethylallyl diphosphate from (2E)-4-hydroxy-3-methylbutenyl diphosphate: step 1/1. The protein operates within isoprenoid biosynthesis; isopentenyl diphosphate biosynthesis via DXP pathway; isopentenyl diphosphate from 1-deoxy-D-xylulose 5-phosphate: step 6/6. In terms of biological role, catalyzes the conversion of 1-hydroxy-2-methyl-2-(E)-butenyl 4-diphosphate (HMBPP) into a mixture of isopentenyl diphosphate (IPP) and dimethylallyl diphosphate (DMAPP). Acts in the terminal step of the DOXP/MEP pathway for isoprenoid precursor biosynthesis. The chain is 4-hydroxy-3-methylbut-2-enyl diphosphate reductase from Xanthomonas campestris pv. campestris (strain ATCC 33913 / DSM 3586 / NCPPB 528 / LMG 568 / P 25).